Reading from the N-terminus, the 371-residue chain is Chorismate synthase (371 aa).

2 residues coordinate NADP(+): arginine 48 and arginine 54. FMN is bound by residues 130–132, 242–243, glycine 287, 302–306, and arginine 328; these read RSS, NA, and KPTSS.

Belongs to the chorismate synthase family. As to quaternary structure, homotetramer. It depends on FMNH2 as a cofactor.

The catalysed reaction is 5-O-(1-carboxyvinyl)-3-phosphoshikimate = chorismate + phosphate. It participates in metabolic intermediate biosynthesis; chorismate biosynthesis; chorismate from D-erythrose 4-phosphate and phosphoenolpyruvate: step 7/7. Catalyzes the anti-1,4-elimination of the C-3 phosphate and the C-6 proR hydrogen from 5-enolpyruvylshikimate-3-phosphate (EPSP) to yield chorismate, which is the branch point compound that serves as the starting substrate for the three terminal pathways of aromatic amino acid biosynthesis. This reaction introduces a second double bond into the aromatic ring system. The chain is Chorismate synthase from Azorhizobium caulinodans (strain ATCC 43989 / DSM 5975 / JCM 20966 / LMG 6465 / NBRC 14845 / NCIMB 13405 / ORS 571).